We begin with the raw amino-acid sequence, 87 residues long: Small ribosomal subunit protein uS15 (87 aa).

This sequence belongs to the universal ribosomal protein uS15 family. As to quaternary structure, part of the 30S ribosomal subunit. Forms a bridge to the 50S subunit in the 70S ribosome, contacting the 23S rRNA.

Functionally, one of the primary rRNA binding proteins, it binds directly to 16S rRNA where it helps nucleate assembly of the platform of the 30S subunit by binding and bridging several RNA helices of the 16S rRNA. Its function is as follows. Forms an intersubunit bridge (bridge B4) with the 23S rRNA of the 50S subunit in the ribosome. The chain is Small ribosomal subunit protein uS15 from Ruminiclostridium cellulolyticum (strain ATCC 35319 / DSM 5812 / JCM 6584 / H10) (Clostridium cellulolyticum).